Consider the following 519-residue polypeptide: Aldehyde dehydrogenase X, mitochondrial (519 aa).

The transit peptide at 1–19 (MLTARLLLPRLLCLQGRTT) directs the protein to the mitochondrion. K53 bears the N6-acetyllysine mark. K54 carries the post-translational modification N6-acetyllysine; alternate. The residue at position 54 (K54) is an N6-succinyllysine; alternate. K83 bears the N6-succinyllysine mark. Residue 264–269 (GSTEVG) coordinates NAD(+). The active-site Proton acceptor is the E287. C321 (nucleophile) is an active-site residue. K366, K385, K401, K416, and K428 each carry N6-acetyllysine; alternate. N6-succinyllysine; alternate is present on residues K366, K385, K401, K416, and K428. At K431 the chain carries N6-acetyllysine.

The protein belongs to the aldehyde dehydrogenase family. As to quaternary structure, homotetramer.

Its subcellular location is the mitochondrion matrix. The catalysed reaction is an aldehyde + NAD(+) + H2O = a carboxylate + NADH + 2 H(+). Its pathway is alcohol metabolism; ethanol degradation; acetate from ethanol: step 2/2. Its function is as follows. ALDHs play a major role in the detoxification of alcohol-derived acetaldehyde. They are involved in the metabolism of corticosteroids, biogenic amines, neurotransmitters, and lipid peroxidation. The chain is Aldehyde dehydrogenase X, mitochondrial (Aldh1b1) from Mus musculus (Mouse).